We begin with the raw amino-acid sequence, 125 residues long: SOSS complex subunit C homolog (125 aa).

The disordered stretch occupies residues 43 to 77 (MPSPQLLGQPTVAPEFLPQGVGLPTNATPPRSAFN). Positions 67–77 (TNATPPRSAFN) are enriched in polar residues.

It belongs to the SOSS-C family.

The protein is SOSS complex subunit C homolog of Drosophila persimilis (Fruit fly).